The following is a 157-amino-acid chain: UPF0262 protein Avi_0642 (157 aa).

The protein belongs to the UPF0262 family.

This Allorhizobium ampelinum (strain ATCC BAA-846 / DSM 112012 / S4) (Agrobacterium vitis (strain S4)) protein is UPF0262 protein Avi_0642.